Reading from the N-terminus, the 496-residue chain is Nitric oxide synthase, inducible (496 aa).

Residues Cys6, Glu32, and Gln36 each coordinate FMN. The FAD-binding FR-type domain maps to 101–341 (KNLFTMRLRS…VRSVSGFQLP (241 aa)). Arg121 contacts NADP(+). 6 residues coordinate FAD: His143, Arg277, Tyr279, Ser280, Thr295, and Ala297. Thr300 contributes to the NADP(+) binding site. Tyr301, Val314, Cys315, and Ser316 together coordinate FAD. The NADP(+) site is built by Thr355, Arg388, Ser417, Arg418, Lys424, Tyr426, Gln428, and Asp461.

It belongs to the NOS family. Homodimer. Interacts with NHERF1. Interacts with GAPDH; induced by oxidatively-modified low-densitity lipoprotein (LDL(ox)). Interacts with S100A8 and S100A9 to form the iNOS-S100A8/9 transnitrosylase complex. Interacts with SPSB1, SPSB2 and SPSB4. Interacts with ELOC and CUL5 in the presence of SPSB1 or SPSB2 or SPSB4. Forms a complex with ASL, ASS1 and HSP90AA1; the complex regulates cell-autonomous L-arginine synthesis and citrulline recycling while channeling extracellular L-arginine to nitric oxide synthesis pathway. Heme b is required as a cofactor. The cofactor is FAD. FMN serves as cofactor. Requires (6R)-L-erythro-5,6,7,8-tetrahydrobiopterin as cofactor. Post-translationally, polyubiquitinated; mediated by SPSB1, SPSB2 and SPSB4, leading to proteasomal degradation.

Its subcellular location is the cytoplasm. It is found in the cytosol. The enzyme catalyses 2 L-arginine + 3 NADPH + 4 O2 + H(+) = 2 L-citrulline + 2 nitric oxide + 3 NADP(+) + 4 H2O. Its activity is regulated as follows. Not stimulated by calcium/calmodulin. Produces nitric oxide (NO) which is a messenger molecule with diverse functions throughout the body. In macrophages, NO mediates tumoricidal and bactericidal actions. Also has nitrosylase activity and mediates cysteine S-nitrosylation of cytoplasmic target proteins such PTGS2/COX2. As component of the iNOS-S100A8/9 transnitrosylase complex involved in the selective inflammatory stimulus-dependent S-nitrosylation of GAPDH implicated in regulation of the GAIT complex activity and probably multiple targets including ANXA5, EZR, MSN and VIM. Involved in inflammation, enhances the synthesis of pro-inflammatory mediators such as IL6 and IL8. The sequence is that of Nitric oxide synthase, inducible (NOS2) from Oryctolagus cuniculus (Rabbit).